Reading from the N-terminus, the 136-residue chain is Classical arabinogalactan protein 26 (136 aa).

An N-terminal signal peptide occupies residues 1–21 (MSVSLFTAFTVLSLCLHTSTS). Residues 38–95 (APSSFSASTPAMSPDTSPLFPTPGSSEMSPSPSESSIMPTIPSSLSPPNPDAVTPDPL) are disordered. The span at 40-53 (SSFSASTPAMSPDT) shows a compositional bias: polar residues. Over residues 59 to 81 (TPGSSEMSPSPSESSIMPTIPSS) the composition is skewed to low complexity. Ser108 carries GPI-anchor amidated serine lipidation. A propeptide spans 109-136 (SSVCLVSSQLSSLLLVLLMLLLAFCSFF) (removed in mature form).

The protein belongs to the classical AGP family. O-glycosylated on the hydroxyproline residues.

The protein localises to the cell membrane. Functionally, proteoglycan that seems to be implicated in diverse developmental roles such as differentiation, cell-cell recognition, embryogenesis and programmed cell death. The sequence is that of Classical arabinogalactan protein 26 (AGP26) from Arabidopsis thaliana (Mouse-ear cress).